A 313-amino-acid chain; its full sequence is Ribosomal RNA small subunit methyltransferase H (313 aa).

Residues 35 to 37 (GGH), Asp55, Phe81, Asp103, and Gln110 each bind S-adenosyl-L-methionine.

This sequence belongs to the methyltransferase superfamily. RsmH family.

Its subcellular location is the cytoplasm. The enzyme catalyses cytidine(1402) in 16S rRNA + S-adenosyl-L-methionine = N(4)-methylcytidine(1402) in 16S rRNA + S-adenosyl-L-homocysteine + H(+). Specifically methylates the N4 position of cytidine in position 1402 (C1402) of 16S rRNA. This is Ribosomal RNA small subunit methyltransferase H from Pseudomonas paraeruginosa (strain DSM 24068 / PA7) (Pseudomonas aeruginosa (strain PA7)).